Consider the following 465-residue polypeptide: Gamma-aminobutyric acid receptor subunit rho-2 (465 aa).

The first 20 residues, 1–20 (MPYFTRLILFLFCLMVLVES), serve as a signal peptide directing secretion. The Extracellular portion of the chain corresponds to 21-260 (RKPKRKRWTG…LYINFTLRRH (240 aa)). Arginine 105 serves as a coordination point for 4-aminobutanoate. A glycan (N-linked (GlcNAc...) asparagine) is linked at asparagine 120. A 4-aminobutanoate-binding site is contributed by serine 169. Cysteine 178 and cysteine 192 form a disulfide bridge. A 4-aminobutanoate-binding site is contributed by glutamate 197. Asparagine 254 carries an N-linked (GlcNAc...) asparagine glycan. The chain crosses the membrane as a helical span at residues 261 to 281 (IFFFLLQTYFPATLMVMLSWV). The Cytoplasmic portion of the chain corresponds to 282–293 (SFWIDRRAVPAR). The helical transmembrane segment at 294 to 314 (VSLGITTVLTMTTIITGVNAS) threads the bilayer. Topologically, residues 315–325 (MPRVSYVKAVD) are extracellular. The helical transmembrane segment at 326 to 346 (IYLWVSFVFVFLSVLEYAAVN) threads the bilayer. Topologically, residues 347–443 (YLTTVQERKE…IFQNTHAIDK (97 aa)) are cytoplasmic. Residues 444–464 (YSRLIFPASYIFFNLIYWSVF) form a helical membrane-spanning segment. Residue serine 465 is a topological domain, extracellular.

The protein belongs to the ligand-gated ion channel (TC 1.A.9) family. Gamma-aminobutyric acid receptor (TC 1.A.9.5) subfamily. GABRR2 sub-subfamily. As to quaternary structure, three rho subunits (rho-1/GBRR1, rho-2/GBRR2 and rho-3/GBRR3) coassemble either to form functional homopentamers or heteropentamers. Rho-2 is unable to form a functional homopentamer. Interacts with SQSTM1.

The protein resides in the postsynaptic cell membrane. Its subcellular location is the cell membrane. It carries out the reaction chloride(in) = chloride(out). Its function is as follows. Rho subunit of the pentameric ligand-gated chloride channels responsible for mediating the effects of gamma-aminobutyric acid (GABA), the major inhibitory neurotransmitter in the brain. Rho-containing GABA-gated chloride channels are a subclass of GABA(A) receptors (GABAARs) entirely composed of rho subunits, where GABA molecules bind at the rho intersubunit interfaces. When activated by GABA, rho-GABAARs selectively allow the flow of chloride anions across the cell membrane down their electrochemical gradient. Rho-2 GABAARs may contribute to the regulation of glial development in the cerebellum by controlling extrasynaptic transmission. Rho-2 GABAARs are also involved in neuronal tonic (extrasynaptic) and phasic (synaptic) transmission in the Purkinje neurons of the cerebellum. Rho-2 GABAARs expressed in retina may play a role in retinal neurotransmission. The sequence is that of Gamma-aminobutyric acid receptor subunit rho-2 from Homo sapiens (Human).